The primary structure comprises 639 residues: Collagen alpha-1(XII) chain (639 aa).

A VWFA domain is found at 1–114 (CRKSLLQAVA…DSLSKIVDDL (114 aa)). 6 consecutive Fibronectin type-III domains span residues 130–219 (APSN…LPVP), 220–310 (IVSL…LPLP), 311–401 (RPQD…VPAP), 402–490 (TNLR…SPKS), 491–585 (GPRN…TVRN), and 586–639 (LRVY…LRNL). The tract at residues 473–496 (DESESDDLTGSERTSPKSGPRNLQ) is disordered.

It belongs to the fibril-associated collagens with interrupted helices (FACIT) family. In terms of assembly, trimer of identical chains each containing 190 kDa of non-triple-helical sequences. Post-translationally, the triple-helical tail is stabilized by disulfide bonds at each end. In terms of processing, prolines at the third position of the tripeptide repeating unit (G-X-Y) are hydroxylated in some or all of the chains. O-glycosylated; glycosaminoglycan of chondroitin-sulfate type.

It is found in the secreted. It localises to the extracellular space. The protein localises to the extracellular matrix. Functionally, type XII collagen interacts with type I collagen-containing fibrils, the COL1 domain could be associated with the surface of the fibrils, and the COL2 and NC3 domains may be localized in the perifibrillar matrix. This chain is Collagen alpha-1(XII) chain (COL12A1), found in Oryctolagus cuniculus (Rabbit).